The chain runs to 382 residues: Glutamine synthetase cytosolic isozyme (382 aa).

One can recognise a GS beta-grasp domain in the interval 36-118 (GKICAEYVWI…VMCDCYEPPK (83 aa)). The GS catalytic domain maps to 135–382 (TRFACAEVME…RLIVETTILL (248 aa)).

The protein belongs to the glutamine synthetase family. In terms of assembly, homooctamer.

The protein resides in the cytoplasm. It carries out the reaction L-glutamate + NH4(+) + ATP = L-glutamine + ADP + phosphate + H(+). The sequence is that of Glutamine synthetase cytosolic isozyme (GLN1) from Chlamydomonas reinhardtii (Chlamydomonas smithii).